Here is a 158-residue protein sequence, read N- to C-terminus: 6,7-dimethyl-8-ribityllumazine synthase (158 aa).

5-amino-6-(D-ribitylamino)uracil contacts are provided by residues Phe22, 56-58 (ALE), and 80-82 (VVI). 85 to 86 (ET) contacts (2S)-2-hydroxy-3-oxobutyl phosphate. His88 acts as the Proton donor in catalysis. Asn113 lines the 5-amino-6-(D-ribitylamino)uracil pocket. (2S)-2-hydroxy-3-oxobutyl phosphate is bound at residue Arg127.

Belongs to the DMRL synthase family.

The catalysed reaction is (2S)-2-hydroxy-3-oxobutyl phosphate + 5-amino-6-(D-ribitylamino)uracil = 6,7-dimethyl-8-(1-D-ribityl)lumazine + phosphate + 2 H2O + H(+). It functions in the pathway cofactor biosynthesis; riboflavin biosynthesis; riboflavin from 2-hydroxy-3-oxobutyl phosphate and 5-amino-6-(D-ribitylamino)uracil: step 1/2. In terms of biological role, catalyzes the formation of 6,7-dimethyl-8-ribityllumazine by condensation of 5-amino-6-(D-ribitylamino)uracil with 3,4-dihydroxy-2-butanone 4-phosphate. This is the penultimate step in the biosynthesis of riboflavin. In Neisseria meningitidis serogroup C (strain 053442), this protein is 6,7-dimethyl-8-ribityllumazine synthase.